The chain runs to 90 residues: MRRLLMKGIRFYQRAFSAFSPAHCRYYPTCSNYTLEAINRFGAVKGVLMGVARILRCQPLVKGGFDPVPAHFSLRRNPQYKEEDHRGKKR.

Positions 68-90 (VPAHFSLRRNPQYKEEDHRGKKR) are disordered. Residues 79–90 (QYKEEDHRGKKR) show a composition bias toward basic and acidic residues.

It belongs to the UPF0161 family.

The protein resides in the cell membrane. Functionally, could be involved in insertion of integral membrane proteins into the membrane. In Lactiplantibacillus plantarum (strain ATCC BAA-793 / NCIMB 8826 / WCFS1) (Lactobacillus plantarum), this protein is Putative membrane protein insertion efficiency factor.